Reading from the N-terminus, the 167-residue chain is Phosphopantetheine adenylyltransferase (167 aa).

Thr10 contributes to the substrate binding site. ATP is bound by residues 10–11 (TF) and His18. The substrate site is built by Lys42, Leu75, and Arg89. ATP-binding positions include 90-92 (GVR), Glu100, and 125-131 (YTYVASS).

The protein belongs to the bacterial CoaD family. In terms of assembly, homohexamer. Mg(2+) serves as cofactor.

It localises to the cytoplasm. It catalyses the reaction (R)-4'-phosphopantetheine + ATP + H(+) = 3'-dephospho-CoA + diphosphate. The protein operates within cofactor biosynthesis; coenzyme A biosynthesis; CoA from (R)-pantothenate: step 4/5. Reversibly transfers an adenylyl group from ATP to 4'-phosphopantetheine, yielding dephospho-CoA (dPCoA) and pyrophosphate. The protein is Phosphopantetheine adenylyltransferase of Chlorobium phaeobacteroides (strain DSM 266 / SMG 266 / 2430).